The sequence spans 328 residues: Biotin synthase (328 aa).

Residues 50–277 (FGDQVHLCCI…GKEIVICGGR (228 aa)) enclose the Radical SAM core domain. Positions 67, 71, and 74 each coordinate [4Fe-4S] cluster. [2Fe-2S] cluster-binding residues include Ser111, Cys142, and Cys202.

This sequence belongs to the radical SAM superfamily. Biotin synthase family. As to quaternary structure, homodimer. [4Fe-4S] cluster serves as cofactor. Requires [2Fe-2S] cluster as cofactor.

The enzyme catalyses (4R,5S)-dethiobiotin + (sulfur carrier)-SH + 2 reduced [2Fe-2S]-[ferredoxin] + 2 S-adenosyl-L-methionine = (sulfur carrier)-H + biotin + 2 5'-deoxyadenosine + 2 L-methionine + 2 oxidized [2Fe-2S]-[ferredoxin]. Its pathway is cofactor biosynthesis; biotin biosynthesis; biotin from 7,8-diaminononanoate: step 2/2. Functionally, catalyzes the conversion of dethiobiotin (DTB) to biotin by the insertion of a sulfur atom into dethiobiotin via a radical-based mechanism. The sequence is that of Biotin synthase from Desulfatibacillum aliphaticivorans.